Consider the following 115-residue polypeptide: Large ribosomal subunit protein uL22 (115 aa).

It belongs to the universal ribosomal protein uL22 family. As to quaternary structure, part of the 50S ribosomal subunit.

Its function is as follows. This protein binds specifically to 23S rRNA; its binding is stimulated by other ribosomal proteins, e.g. L4, L17, and L20. It is important during the early stages of 50S assembly. It makes multiple contacts with different domains of the 23S rRNA in the assembled 50S subunit and ribosome. In terms of biological role, the globular domain of the protein is located near the polypeptide exit tunnel on the outside of the subunit, while an extended beta-hairpin is found that lines the wall of the exit tunnel in the center of the 70S ribosome. In Coxiella burnetii (strain CbuG_Q212) (Coxiella burnetii (strain Q212)), this protein is Large ribosomal subunit protein uL22.